The following is a 180-amino-acid chain: Type-1 fimbrial protein subunit (180 aa).

Residues Met1–Ala22 form the signal peptide. Cys38 and Cys78 are oxidised to a cystine.

It belongs to the fimbrial protein family.

The protein localises to the fimbrium. In terms of biological role, fimbriae (also called pili), polar filaments radiating from the surface of the bacterium to a length of 0.5-1.5 micrometers and numbering 100-300 per cell, enable bacteria to colonize the epithelium of specific host organs. This chain is Type-1 fimbrial protein subunit (fimA), found in Serratia marcescens.